Consider the following 615-residue polypeptide: Medium-chain acyl-CoA ligase ACSF2, mitochondrial (615 aa).

Residues 1–42 (MAVYVGMLRVARLCARSPRVLGARVGLSRVWQEARLWGVRPL) constitute a mitochondrion transit peptide. At lysine 179 the chain carries N6-acetyllysine. Lysine 182 carries the post-translational modification N6-acetyllysine; alternate. Lysine 182 carries the post-translational modification N6-succinyllysine; alternate. The residue at position 199 (lysine 199) is an N6-acetyllysine. An ATP-binding site is contributed by 263-271 (TSGTTGSPK). N6-acetyllysine occurs at positions 340 and 398. N6-succinyllysine is present on lysine 478. Aspartate 493 and arginine 508 together coordinate ATP. Lysine 510 is subject to N6-acetyllysine. Lysine 544 and lysine 570 each carry N6-acetyllysine; alternate. Lysine 544 and lysine 570 each carry N6-succinyllysine; alternate. Lysine 599 serves as a coordination point for ATP. Lysine 599 is modified (N6-succinyllysine).

It belongs to the ATP-dependent AMP-binding enzyme family.

Its subcellular location is the mitochondrion. It carries out the reaction a medium-chain fatty acid + ATP + CoA = a medium-chain fatty acyl-CoA + AMP + diphosphate. The enzyme catalyses octanoate + ATP + CoA = octanoyl-CoA + AMP + diphosphate. Functionally, acyl-CoA synthases catalyze the initial reaction in fatty acid metabolism, by forming a thioester with CoA. Has some preference toward medium-chain substrates. Plays a role in adipocyte differentiation. The chain is Medium-chain acyl-CoA ligase ACSF2, mitochondrial from Bos taurus (Bovine).